The chain runs to 319 residues: Aspartate carbamoyltransferase catalytic subunit (319 aa).

Carbamoyl phosphate is bound by residues Arg-65 and Thr-66. Residue Lys-93 coordinates L-aspartate. Carbamoyl phosphate-binding residues include Arg-115, His-149, and Gln-152. Residues Arg-182 and Arg-237 each coordinate L-aspartate. Residues Gly-278 and Pro-279 each contribute to the carbamoyl phosphate site.

This sequence belongs to the aspartate/ornithine carbamoyltransferase superfamily. ATCase family. Heterododecamer (2C3:3R2) of six catalytic PyrB chains organized as two trimers (C3), and six regulatory PyrI chains organized as three dimers (R2).

It catalyses the reaction carbamoyl phosphate + L-aspartate = N-carbamoyl-L-aspartate + phosphate + H(+). Its pathway is pyrimidine metabolism; UMP biosynthesis via de novo pathway; (S)-dihydroorotate from bicarbonate: step 2/3. In terms of biological role, catalyzes the condensation of carbamoyl phosphate and aspartate to form carbamoyl aspartate and inorganic phosphate, the committed step in the de novo pyrimidine nucleotide biosynthesis pathway. The polypeptide is Aspartate carbamoyltransferase catalytic subunit (Dechloromonas aromatica (strain RCB)).